The sequence spans 395 residues: tRNA (guanine-N(7)-)-methyltransferase (395 aa).

Positions 126, 151, and 178 each coordinate S-adenosyl-L-methionine. Residues Lys-204 and Asp-234 each contribute to the substrate site.

It belongs to the class I-like SAM-binding methyltransferase superfamily. TrmB family.

The enzyme catalyses guanosine(46) in tRNA + S-adenosyl-L-methionine = N(7)-methylguanosine(46) in tRNA + S-adenosyl-L-homocysteine. It functions in the pathway tRNA modification; N(7)-methylguanine-tRNA biosynthesis. Functionally, catalyzes the formation of N(7)-methylguanine at position 46 (m7G46) in tRNA. The sequence is that of tRNA (guanine-N(7)-)-methyltransferase from Campylobacter fetus subsp. fetus (strain 82-40).